An 879-amino-acid polypeptide reads, in one-letter code: Exocyst complex component 1 (879 aa).

Residues 29-94 (SQYSESEYDP…ATSLGNNDGD (66 aa)) are disordered. Residues 40–52 (ETTHSESDSENHH) are compositionally biased toward basic and acidic residues. The segment covering 64 to 76 (FLSQSNDNVSNGP) has biased composition (polar residues). A compositionally biased stretch (low complexity) spans 77–91 (SNNTLSSSATSLGNN). Coiled coils occupy residues 165–187 (YNKQLQDMKKYIEHIEGKNNKME) and 226–248 (KGLKMAIEAAEDLKRALTTKLKS). 2 disordered regions span residues 371–413 (QNDF…GKDG) and 455–557 (GQRN…PDAP). A compositionally biased stretch (low complexity) spans 373-409 (DFFSSSSSSKKSIDSLNNNTSTSTPSKNSSSSSSSSS). Positions 480–500 (KKSSKKDKKDKKDKKDKKDKK) are enriched in basic residues. The span at 519–532 (DSNSPKSPNNAVNG) shows a compositional bias: polar residues. The segment covering 541-551 (SPPPPPPPPPK) has biased composition (pro residues).

Belongs to the SEC3 family. In terms of assembly, the exocyst complex is composed of sec3/exoc1, sec5/exoc2, sec6/exoc3, sec8/exoc4, sec10/exoc5, sec15/exoc6, exo70/exoc7 and exo84/exoc8.

Its subcellular location is the midbody. It localises to the midbody ring. Functionally, component of the exocyst complex involved in the docking of exocytic vesicles with fusion sites on the plasma membrane. This Dictyostelium discoideum (Social amoeba) protein is Exocyst complex component 1 (exoc1).